The sequence spans 631 residues: MPPGRKQGAGCWTCRLRRKRCDSVQPVCGSCQSLEITCYSGEARPSWMDGGSDQKHMSESIKARIKHNAMLRRERRLMANEDHDIIMTMETDHRAPGELMNSGSALGASSSSRVSNPVLEYDSLADSSASTPSTSSGRPTTLRSSVDRFDEGQSPLTVASWASGPPTLSSGYSASSTRPAVPIQVQLGSAMIYLDYVFPFLFPFYQPSLIETGRQWLLGLLCQNDVSFHIASSLSAYFFSLVPQGDDQDMHDDCKALVWDKLIEQMDLAIGSIQSTVSAVSSSGARTPLLDKTRIMQEITQLLIVEVTVRNNVNWQIHLTPALSIFDEIFKSHGLDQSSKPSLNILSHALPSSIPVTTQHHKSLPNTADQSALTFFVSLLLFVDIMASASLGTSPTLQSYHESLLPSQSDQDFHISLEKVLGCQNWALVAIGNISALCAWKRDAKRGGNFSIFRLVSLAEPISQALERGLKDLDTSPPSPQPTKTSAGRLEAYYSRHDKAIDHKFTANITRIWAHAAIIYLSVSLSGWQTNNNEIRAAVAQVLALLEMIDSPGQLRSLSWPICIAGCLALPAQVPAFRRIVGTMGPLGKFGTLSNALSIMETVWNSRDSIDSNTWDIASALSIIGSPALLI.

The segment at residues 11–38 (CWTCRLRRKRCDSVQPVCGSCQSLEITC) is a DNA-binding region (zn(2)-C6 fungal-type). Residues 123-144 (SLADSSASTPSTSSGRPTTLRS) show a composition bias toward low complexity. Disordered stretches follow at residues 123 to 148 (SLAD…SVDR) and 469 to 488 (GLKD…TSAG).

Its subcellular location is the nucleus. In terms of biological role, transcription factor; part of the gene cluster that mediates the biosynthesis of pestalotiollide B which is part of dibenzodioxocinones, a novel class of inhibitors against cholesterol ester transfer protein (CEPT). Acts as the key transcription factor within the cluster and positively regulates the expression of the cluster genes and the subsequent production of dibenzodioxocinones such as pestalotiollide B, pestalotiollide C, 1',2'-dehydropenicillide, 3'-methoxy-1',2'-dehydropenicillide and 1',2'-epoxy-3',4'-didehydropenicillide. Required for the expression of most PKS genes outside of the dibenzodioxocinones cluster, (43 out of 48 defined PKS genes), and promotes pigmentation of the mycelium and conidia. This Pestalotiopsis microspora protein is Transcription factor dibT.